The chain runs to 147 residues: Lysozyme C (147 aa).

The signal sequence occupies residues 1–17; it reads MRSLLILVLCFLPLAAP. Positions 19-147 constitute a C-type lysozyme domain; sequence KVYGRCELAA…VNVWIRGCRL (129 aa). Disulfide bonds link C24/C145, C48/C133, C82/C98, and C94/C112. Residues E53 and D70 contribute to the active site.

The protein belongs to the glycosyl hydrolase 22 family. In terms of assembly, monomer. In terms of processing, by an evolutionary shift in the site of proteolytic cleavage of prelysozyme, Gly-18 became the N-terminal residue of the mature protein instead of being the C-terminal residue of the signal sequence as in other birds.

Its subcellular location is the secreted. The enzyme catalyses Hydrolysis of (1-&gt;4)-beta-linkages between N-acetylmuramic acid and N-acetyl-D-glucosamine residues in a peptidoglycan and between N-acetyl-D-glucosamine residues in chitodextrins.. Functionally, lysozymes have primarily a bacteriolytic function; those in tissues and body fluids are associated with the monocyte-macrophage system and enhance the activity of immunoagents. This Phasianus colchicus colchicus (Black-necked pheasant) protein is Lysozyme C (LYZ).